The chain runs to 314 residues: Malate dehydrogenase (314 aa).

NAD(+)-binding positions include 12–17 and aspartate 36; that span reads GAGNIG. Substrate-binding residues include arginine 85 and arginine 91. NAD(+)-binding positions include asparagine 98 and 121-123; that span reads VTN. The substrate site is built by asparagine 123 and arginine 154. Histidine 178 acts as the Proton acceptor in catalysis.

This sequence belongs to the LDH/MDH superfamily. MDH type 3 family.

The catalysed reaction is (S)-malate + NAD(+) = oxaloacetate + NADH + H(+). In terms of biological role, catalyzes the reversible oxidation of malate to oxaloacetate. The protein is Malate dehydrogenase of Wolbachia pipientis subsp. Culex pipiens (strain wPip).